A 522-amino-acid chain; its full sequence is Probable poly(ADP-ribose) glycohydrolase 2 (522 aa).

The protein belongs to the poly(ADP-ribose) glycohydrolase family.

The enzyme catalyses [(1''-&gt;2')-ADP-alpha-D-ribose](n) + H2O = [(1''-&gt;2')-ADP-alpha-D-ribose](n-1) + ADP-D-ribose. In terms of biological role, poly(ADP-ribose) synthesized after DNA damage is only present transiently and is rapidly degraded by poly(ADP-ribose) glycohydrolase. The polypeptide is Probable poly(ADP-ribose) glycohydrolase 2 (PARG2) (Arabidopsis thaliana (Mouse-ear cress)).